Consider the following 342-residue polypeptide: tRNA N6-adenosine threonylcarbamoyltransferase (342 aa).

Fe cation contacts are provided by histidine 111 and histidine 115. Substrate is bound by residues 134–138, aspartate 167, glycine 180, and asparagine 277; that span reads LVSGG. Aspartate 305 is a Fe cation binding site.

This sequence belongs to the KAE1 / TsaD family. Fe(2+) serves as cofactor.

The protein resides in the cytoplasm. It catalyses the reaction L-threonylcarbamoyladenylate + adenosine(37) in tRNA = N(6)-L-threonylcarbamoyladenosine(37) in tRNA + AMP + H(+). Functionally, required for the formation of a threonylcarbamoyl group on adenosine at position 37 (t(6)A37) in tRNAs that read codons beginning with adenine. Is involved in the transfer of the threonylcarbamoyl moiety of threonylcarbamoyl-AMP (TC-AMP) to the N6 group of A37, together with TsaE and TsaB. TsaD likely plays a direct catalytic role in this reaction. The sequence is that of tRNA N6-adenosine threonylcarbamoyltransferase from Histophilus somni (strain 2336) (Haemophilus somnus).